The primary structure comprises 755 residues: uncharacterized protein (755 aa).

Helical transmembrane passes span 46–66 (LGLG…GGLY), 70–90 (LKTI…GTIV), 93–113 (GWGL…YLAV), 118–138 (GAMV…NVST), 143–163 (FTSL…IWPF), 411–431 (IAHL…IFVL), 446–466 (LLGT…IQDP), 482–502 (ALLR…ALIL), and 514–534 (ALLS…GLAF).

This sequence belongs to the YccS/YhfK family.

The protein localises to the cell membrane. This is an uncharacterized protein from Synechocystis sp. (strain ATCC 27184 / PCC 6803 / Kazusa).